The following is a 546-amino-acid chain: Chaperonin GroEL 1 (546 aa).

ATP is bound by residues 29–32 (TIGP), 86–90 (DGTTT), Gly-413, 477–479 (NAA), and Asp-493. The tract at residues 523 to 546 (PAEPAPQDGHGHGHGHSHPQGPGF) is disordered.

It belongs to the chaperonin (HSP60) family. In terms of assembly, forms a cylinder of 14 subunits composed of two heptameric rings stacked back-to-back. Interacts with the co-chaperonin GroES.

Its subcellular location is the cytoplasm. It catalyses the reaction ATP + H2O + a folded polypeptide = ADP + phosphate + an unfolded polypeptide.. In terms of biological role, together with its co-chaperonin GroES, plays an essential role in assisting protein folding. The GroEL-GroES system forms a nano-cage that allows encapsulation of the non-native substrate proteins and provides a physical environment optimized to promote and accelerate protein folding. The polypeptide is Chaperonin GroEL 1 (Frankia casuarinae (strain DSM 45818 / CECT 9043 / HFP020203 / CcI3)).